The following is a 243-amino-acid chain: Small ribosomal subunit protein uS3 (243 aa).

The KH type-2 domain occupies 39–110 (IRTFIQKKYG…QVRINVVEVE (72 aa)). The interval 216–243 (KTIPVGASPKRKAGRRPQQFEDRSNENS) is disordered. Positions 233-243 (QQFEDRSNENS) are enriched in basic and acidic residues.

It belongs to the universal ribosomal protein uS3 family. Part of the 30S ribosomal subunit. Forms a tight complex with proteins S10 and S14.

Its function is as follows. Binds the lower part of the 30S subunit head. Binds mRNA in the 70S ribosome, positioning it for translation. In Prochlorococcus marinus (strain MIT 9312), this protein is Small ribosomal subunit protein uS3.